A 338-amino-acid chain; its full sequence is Methionine import ATP-binding protein MetN (338 aa).

An ABC transporter domain is found at 2-241; the sequence is ISLDGIRKVF…PKEHITKEFV (240 aa). An ATP-binding site is contributed by 38-45; sequence GYSGAGKS.

Belongs to the ABC transporter superfamily. Methionine importer (TC 3.A.1.24) family. The complex is composed of two ATP-binding proteins (MetN), two transmembrane proteins (MetI) and a solute-binding protein (MetQ).

It localises to the cell membrane. It catalyses the reaction L-methionine(out) + ATP + H2O = L-methionine(in) + ADP + phosphate + H(+). The catalysed reaction is D-methionine(out) + ATP + H2O = D-methionine(in) + ADP + phosphate + H(+). Its function is as follows. Part of the ABC transporter complex MetNIQ involved in methionine import. Responsible for energy coupling to the transport system. The chain is Methionine import ATP-binding protein MetN from Halalkalibacterium halodurans (strain ATCC BAA-125 / DSM 18197 / FERM 7344 / JCM 9153 / C-125) (Bacillus halodurans).